The following is a 129-amino-acid chain: uncharacterized protein (129 aa).

This sequence belongs to the asfivirus C129R family.

The protein localises to the virion. Its function is as follows. Plays a role in the inhibition of type I interferon signaling pathway. Mechanistically, specifically interacts with 2',3'-cGAMP and cleaves it via its phosphodiesterase activity. In turn, prevents 2',3'-cGAMP interaction with host ER-resident STING1 leading to inhibition of downstream signaling pathway and type I interferon production. This is an uncharacterized protein from African swine fever virus (isolate Pig/Kenya/KEN-50/1950) (ASFV).